Reading from the N-terminus, the 296-residue chain is GTPase Era (296 aa).

Residues 3–170 enclose the Era-type G domain; sequence KSGFITIVGR…LELMVKYLPE (168 aa). Residues 11–18 form a G1 region; the sequence is GRPNVGKS. GTP is bound at residue 11-18; sequence GRPNVGKS. Residues 37–41 form a G2 region; that stretch reads QTTRN. The interval 58 to 61 is G3; it reads DTPG. Residues 58–62 and 120–123 each bind GTP; these read DTPGI and NKVD. The G4 stretch occupies residues 120-123; sequence NKVD. A G5 region spans residues 149–151; that stretch reads ISA. A KH type-2 domain is found at 201-278; sequence LSQEVPHGIA…NIKIWVKVRK (78 aa).

It belongs to the TRAFAC class TrmE-Era-EngA-EngB-Septin-like GTPase superfamily. Era GTPase family. As to quaternary structure, monomer.

It is found in the cytoplasm. Its subcellular location is the cell membrane. Functionally, an essential GTPase that binds both GDP and GTP, with rapid nucleotide exchange. Plays a role in 16S rRNA processing and 30S ribosomal subunit biogenesis and possibly also in cell cycle regulation and energy metabolism. The protein is GTPase Era of Clostridium perfringens (strain 13 / Type A).